The primary structure comprises 519 residues: RxLR effector protein PITG_15278 (519 aa).

Residues 1-24 (MHFIYRVVLVLAAFALFKVDSISA) form the signal peptide. The RxLR-dEER signature appears at 49–59 (RQLRVMDDNER).

This sequence belongs to the RxLR effector family.

It localises to the secreted. The protein resides in the host cytoplasm. Effector that enhances P.infestans colonization of Nicotiana benthamiana leaves. The chain is RxLR effector protein PITG_15278 from Phytophthora infestans (strain T30-4) (Potato late blight agent).